The primary structure comprises 293 residues: MAYHSAYGVHGSKHRTRAAPDPPPLFDDTSGGYSSQLGGYPAPGADVAFSVNNLLGDPVANMAMAYGTSIASQGKDIVHKELHRFVSVNKLKYFFAVDTAYVAKKLGLLVFPYTHQNWKMQYSHDVPLPPRKDLNAPDLYIPTMAFITYVLLAGMALGIQQRFSPEVLGLCASTALVWVFMEVLALLLGLYLATVRSELSTFHLLAYSGYKYVGMILSVLTGLLFGSDGYYVALAWTSSALMYFIVRSLRTAASGPDSMGGPAPRQRLQLYLTLGAAAFQPLIIYWLTFHLVR.

Residues M1 to D27 form a disordered region. The residue at position 2 (A2) is an N-acetylalanine. Residues A2 to D138 lie on the Cytoplasmic side of the membrane. A Phosphoserine modification is found at S12. A helical transmembrane segment spans residues L139–I159. Residues Q160 to T174 lie on the Lumenal side of the membrane. Residues A175–V195 traverse the membrane as a helical segment. At R196–H203 the chain is on the cytoplasmic side. The helical transmembrane segment at L204 to G226 threads the bilayer. At S227–G229 the chain is on the lumenal side. Residues Y230–L249 traverse the membrane as a helical segment. Topologically, residues R250–Y271 are cytoplasmic. A helical transmembrane segment spans residues L272–V292.

It belongs to the YIF1 family. As to quaternary structure, interacts with YIPF5.

It localises to the endoplasmic reticulum membrane. It is found in the golgi apparatus membrane. Its subcellular location is the endoplasmic reticulum-Golgi intermediate compartment membrane. Functionally, possible role in transport between endoplasmic reticulum and Golgi. This chain is Protein YIF1A (Yif1a), found in Mus musculus (Mouse).